The following is a 938-amino-acid chain: Isoleucine--tRNA ligase (938 aa).

A 'HIGH' region motif is present at residues 58 to 68 (PYANGSIHIGH). K183 carries the post-translational modification N6-acetyllysine. E561 provides a ligand contact to L-isoleucyl-5'-AMP. The 'KMSKS' region motif lies at 602-606 (KMSKS). Residue K605 participates in ATP binding. Zn(2+)-binding residues include C901, C904, C921, and C924.

Belongs to the class-I aminoacyl-tRNA synthetase family. IleS type 1 subfamily. Monomer. The cofactor is Zn(2+).

It localises to the cytoplasm. It catalyses the reaction tRNA(Ile) + L-isoleucine + ATP = L-isoleucyl-tRNA(Ile) + AMP + diphosphate. Catalyzes the attachment of isoleucine to tRNA(Ile). As IleRS can inadvertently accommodate and process structurally similar amino acids such as valine, to avoid such errors it has two additional distinct tRNA(Ile)-dependent editing activities. One activity is designated as 'pretransfer' editing and involves the hydrolysis of activated Val-AMP. The other activity is designated 'posttransfer' editing and involves deacylation of mischarged Val-tRNA(Ile). This chain is Isoleucine--tRNA ligase, found in Shigella flexneri.